Reading from the N-terminus, the 1375-residue chain is MANTLVGRKRIRKFFGKIREVAEMPNLIEVQKASYDQFLMVDEPEGGRADEGLQSVFKSVFPISDFASTALLEFVRYTFEQPKYDVDECRQRGITFAAPLKVTLRLIVFDVDPDTGAKSVKDIKEQDVYMGDMPLMTDNGTFIVNGTERVIVSQMHRSPGVFFDHDKGKTHSSGKLLFAARIIPYRGSWLDVEFDAKDIVHVRIDRKRKLPVTSLLFALGLDGEEILSTFYNRVSYERDGADWRVPFDAERLKGFKASVDLIDADSGEVVLEAGKKLNARNARLIGEKGTKFLKATDEDLVGQYIAEDLVNAKTGEIWAEAGDEISEKLLKALDDVGVTEIPVLDIDHVNVGPYIRNTLAVDKNSAREGALFDIYRVMRPGEPPTLDTAEAMFHSLFFDAERYDLSAVGRVKMNMRLDLDAADTVRTLRREDMLAVVKALVDLRDGKGEIDDIDHLGNRRVRSVGELMENQYRLGLLRMERAIKERMSSVDIDTVMPQDLINAKPAAAAVREFFGSSQLSQFMDQTNPLSEVTHKRRLSALGPGGLTRERAGFEVRDVHPTHYGRICPIETPEGPNIGLINSLATFARVNKYGFIETPFRRVKDGVVTDEVAYLSAMEEAKYYVAQANAGMDAARKLTDDLVVCRRAGEVIVVAPDRVDLMDVSPKQLVSVAAALIPFLENDDANRALMGSNMQRQAVPLVRADAPFVGTGMEAVVARDSGAAIAARRSGIVDQVDATRIVIRATEETDPTKPGVDIYRLQKFQRSNQSTCITQKPLVRVGEPVKKGEIIADGPSTEFGELALGRNVLVAFMPWNGYNFEDSILLSERIVKDDVFTSIHIEEFEVMARDTKLGPEEITRDIPNVSEEALKNLDEAGIVYIGAEVHAGDILVGKITPKGESPMTPEEKLLRAIFGEKASDVRDTSLRVPPGVTGTIVEVRVFNRHGVDKDERAQAIEREEIERLAKDRDDEQTILDRNTYARLAEVLIGQSPIAGPKGFRKDTTLTREGISEYPRSQWWQFAVVDDRLMTEIEAMQKQYDESKKRLEQRFLDKVEKLQRGDELPPGVMKMVKVFVAVKRKIQPGDKMAGRHGNKGVVSRIVPIEDMPFLEDGTHADIVLNPLGVPSRMNVGQILETHLGWAAAGLGRKVSKAVDAYLKNQDIAPLRAEMEAIYSPSELEGLSDEALAEAGNNVRRGVPMATPVFNGAKEADIETMLEMAGLDRSAQSTLYDGRTGEPFDRKVTMGYIYMLKLHHLVDDKIHARSIGPYSLVTQQPLGGKAQFGGQRFGEMEVWALEAYGAAYTLQEMLTVKSDDVAGRTKVYEAIVRGDDTFEAGIPESFNVLVKEMRSLGLNVELTNSKQQAANDQIEPPADAAE.

This sequence belongs to the RNA polymerase beta chain family. In terms of assembly, the RNAP catalytic core consists of 2 alpha, 1 beta, 1 beta' and 1 omega subunit. When a sigma factor is associated with the core the holoenzyme is formed, which can initiate transcription.

It catalyses the reaction RNA(n) + a ribonucleoside 5'-triphosphate = RNA(n+1) + diphosphate. Its function is as follows. DNA-dependent RNA polymerase catalyzes the transcription of DNA into RNA using the four ribonucleoside triphosphates as substrates. This chain is DNA-directed RNA polymerase subunit beta, found in Methylorubrum populi (strain ATCC BAA-705 / NCIMB 13946 / BJ001) (Methylobacterium populi).